A 130-amino-acid chain; its full sequence is Small ribosomal subunit protein uS11 (130 aa).

Belongs to the universal ribosomal protein uS11 family. In terms of assembly, part of the 30S ribosomal subunit. Interacts with proteins S7 and S18. Binds to IF-3.

Located on the platform of the 30S subunit, it bridges several disparate RNA helices of the 16S rRNA. Forms part of the Shine-Dalgarno cleft in the 70S ribosome. This chain is Small ribosomal subunit protein uS11, found in Shewanella baltica (strain OS223).